The following is a 369-amino-acid chain: Deoxyhypusine synthase (369 aa).

S78 carries the phosphoserine modification. NAD(+) contacts are provided by residues 105 to 109, 131 to 133, E137, and D238; these read SNLIS and TAG. Residue 136–137 coordinates spermidine; sequence EE. Position 243 (D243) interacts with spermidine. G283 contributes to the NAD(+) binding site. H288 contributes to the spermidine binding site. 308–309 serves as a coordination point for NAD(+); the sequence is TA. Spermidine contacts are provided by residues 314–316 and 323–329; these read GSD and EAVSWGK. K329 serves as the catalytic Nucleophile. Position 342–343 (342–343) interacts with NAD(+); the sequence is DA.

This sequence belongs to the deoxyhypusine synthase family. As to quaternary structure, homotetramer formed by a dimer of dimers. NAD(+) is required as a cofactor.

The catalysed reaction is [eIF5A protein]-L-lysine + spermidine = [eIF5A protein]-deoxyhypusine + propane-1,3-diamine. It functions in the pathway protein modification; eIF5A hypusination. In terms of biological role, catalyzes the NAD-dependent oxidative cleavage of spermidine and the subsequent transfer of the butylamine moiety of spermidine to the epsilon-amino group of a critical lysine residue of the eIF-5A precursor protein to form the intermediate deoxyhypusine residue. This is the first step of the post-translational modification of that lysine into an unusual amino acid residue named hypusine. Hypusination is unique to mature eIF-5A factor and is essential for its function. In Homo sapiens (Human), this protein is Deoxyhypusine synthase (DHPS).